Reading from the N-terminus, the 602-residue chain is Probable translation initiation factor IF-2 (602 aa).

One can recognise a tr-type G domain in the interval 9–229 (LRQPIVVVLG…GLTQNYMKNK (221 aa)). Residues 18–25 (GHVDHGKT) are G1. 18–25 (GHVDHGKT) contributes to the GTP binding site. Residues 43–47 (EMTQE) form a G2 region. The segment at 82 to 85 (DTPG) is G3. Residues 82-86 (DTPGH) and 136-139 (NKID) each bind GTP. The interval 136 to 139 (NKID) is G4. The G5 stretch occupies residues 204–206 (SAK).

This sequence belongs to the TRAFAC class translation factor GTPase superfamily. Classic translation factor GTPase family. IF-2 subfamily.

Its function is as follows. Function in general translation initiation by promoting the binding of the formylmethionine-tRNA to ribosomes. Seems to function along with eIF-2. In Sulfolobus acidocaldarius (strain ATCC 33909 / DSM 639 / JCM 8929 / NBRC 15157 / NCIMB 11770), this protein is Probable translation initiation factor IF-2 (infB).